The following is a 3788-amino-acid chain: Lysosomal-trafficking regulator (3788 aa).

2 disordered regions span residues 148-180 and 198-217; these read KSTHRYSVRDARKTQLSTSDSEGNSDEKSTVVS and EGHLVAKPDPSATKEQVLSD. Residue Ser-164 is modified to Phosphoserine. The residue at position 165 (Thr-165) is a Phosphothreonine. Ser-166 is subject to Phosphoserine. A WD 1 repeat occupies 662 to 700; it reads GPTSGLPSPSYRFQGILPSSGSEDLLWKWDALEAYQSFV. 3 disordered regions span residues 1169 to 1196, 1213 to 1240, and 1482 to 1519; these read LGPGDAVTEKSHPSEEELLSQPGDFSEE, GYEADSESNPEDVDTQDDGVELNPEAEG, and ESAAERGKRVKKRNKPSVLEDSSFEGAEGDRPEVTESI. The segment covering 1213–1232 has biased composition (acidic residues); that stretch reads GYEADSESNPEDVDTQDDGV. A phosphoserine mark is found at Ser-1503 and Ser-1504. One copy of the WD 2 repeat lies at 1576 to 1620; sequence SQENIFFPSKWQHLVLTYIQHPQGKKNVHGEISIWVSGQRKTDVI. Ser-2099, Ser-2118, Ser-2203, Ser-2207, and Ser-2254 each carry phosphoserine. Residues 2177–2221 are disordered; sequence ANGVSRGSPRFPRARVDHKDVGTEPRSDDDSPGDESYPRRPDNLK. The span at 2190-2205 shows a compositional bias: basic and acidic residues; sequence ARVDHKDVGTEPRSDD. Disordered stretches follow at residues 2556–2581 and 2659–2681; these read HDSESPVHSPSAHRHSVPPKRRSIAG and NTSQSKTSVSQTEISEEDMHHEQ. Basic residues predominate over residues 2566–2578; that stretch reads SAHRHSVPPKRRS. Polar residues predominate over residues 2659-2671; sequence NTSQSKTSVSQTE. A BEACH-type PH domain is found at 2996–3102; that stretch reads AASESIRVNR…VRDDVYQSIL (107 aa). In terms of domain architecture, BEACH spans 3126 to 3409; it reads QITNFEYLTH…QLFHTAHASR (284 aa). WD repeat units follow at residues 3550 to 3589, 3601 to 3640, 3643 to 3686, 3687 to 3731, and 3736 to 3775; these read SQQHQVTSCAWVPDSCQLFTGSKCGVITAYTNRLTSSTPS, GHTEEITGLCVCKPYSVMISVSRDGTCIVWDLNRLCYVQS, GHKS…VGHV, HCRE…PVRE, and KSNKPIISLTFSCDGHHLYTANSEGTVIAWCRKDQQRVKL.

Interacts with CPAP, LIP8 and ZNF521. In terms of tissue distribution, expressed in the heart, lung, liver, spleen, brain and in different immune cell types (purified B and T lymphocytes, bone marrow-derived macrophages and dendritic cells).

The protein resides in the cytoplasm. Its function is as follows. Adapter protein that regulates and/or fission of intracellular vesicles such as lysosomes. Might regulate trafficking of effectors involved in exocytosis. In cytotoxic T-cells and natural killer (NK) cells, has role in the regulation of size, number and exocytosis of lytic granules. In macrophages and dendritic cells, regulates phagosome maturation by controlling the conversion of early phagosomal compartments into late phagosomes. In macrophages and dendritic cells, specifically involved in TLR3- and TLR4-induced production of pro-inflammatory cytokines by regulating the endosomal TLR3- TICAM1/TRIF and TLR4- TICAM1/TRIF signaling pathways. This is Lysosomal-trafficking regulator (Lyst) from Mus musculus (Mouse).